The chain runs to 390 residues: Probable purine permease 7 (390 aa).

Helical transmembrane passes span 42-62 (WLRV…ATIL), 74-94 (TYVV…FRFF), 110-130 (SPSF…VSAY), 131-151 (AYLS…LILA), 169-189 (FTPL…LLVV), 205-225 (VIGF…LSLI), 244-264 (LAIY…FASG), 286-306 (TLAS…GLIF), 312-332 (FSNS…VIVF), and 341-361 (IFSI…HYLD).

It belongs to the purine permeases (TC 2.A.7.14) family.

It localises to the membrane. The sequence is that of Probable purine permease 7 (PUP7) from Arabidopsis thaliana (Mouse-ear cress).